The primary structure comprises 241 residues: Large ribosomal subunit protein uL3 (241 aa).

Positions 140–168 (SHRSIGSTGGRQDPGKTFKNKKMPGHMGD) are disordered. Q151 is subject to N5-methylglutamine.

This sequence belongs to the universal ribosomal protein uL3 family. Part of the 50S ribosomal subunit. Forms a cluster with proteins L14 and L19. Post-translationally, methylated by PrmB.

One of the primary rRNA binding proteins, it binds directly near the 3'-end of the 23S rRNA, where it nucleates assembly of the 50S subunit. This is Large ribosomal subunit protein uL3 from Azorhizobium caulinodans (strain ATCC 43989 / DSM 5975 / JCM 20966 / LMG 6465 / NBRC 14845 / NCIMB 13405 / ORS 571).